The primary structure comprises 397 residues: P2X purinoceptor 3 (397 aa).

Residues 1 to 20 are Cytoplasmic-facing; sequence MNCISDFFTYETTKSVVVKS. A helical transmembrane segment spans residues 21 to 43; it reads WTIGIINRAVQLLIISYFVGWVF. The Extracellular segment spans residues 44 to 322; sequence LHEKAYQVRD…AGKFNIIPTI (279 aa). Residues Lys63 and Lys65 each contribute to the ATP site. 3 disulfide bridges follow: Cys107–Cys153, Cys116–Cys137, and Cys122–Cys147. Residue Glu111 participates in Mg(2+) binding. N-linked (GlcNAc...) asparagine glycosylation occurs at Asn139. A Mg(2+)-binding site is contributed by Asp158. Ca(2+) is bound at residue Asp158. The N-linked (GlcNAc...) asparagine glycan is linked to Asn170. Thr172 is an ATP binding site. Asn194 carries N-linked (GlcNAc...) asparagine glycosylation. Disulfide bonds link Cys203/Cys213 and Cys247/Cys256. ATP-binding residues include Ser275, Asn279, and Arg281. N-linked (GlcNAc...) asparagine glycosylation occurs at Asn290. Lys299 contacts ATP. Residues 323–341 form a helical membrane-spanning segment; sequence ISSVAAFTSVGVGTVLCDI. Residues 342–397 are Cytoplasmic-facing; that stretch reads ILLNFLKGADHYKARKFEEVTETTLKGTASTNPVFASDQATVEKQSTDSGAYSIGH.

This sequence belongs to the P2X receptor family. Homotrimer. Forms heterotrimer with P2RX2. Heterotrimeric P2RX2/3 has a ligand dose-response profile that is distinct from either homotrimeric P2RX2 or P2RX3. Selectively expressed in sensory ganglia.

It is found in the cell membrane. It carries out the reaction Ca(2+)(in) = Ca(2+)(out). The enzyme catalyses Na(+)(in) = Na(+)(out). With respect to regulation, has high sensitivity to ATP. Fast activation by external ATP. Exhibits rapid desensitization. Sensitives to the ATP agonist:alpha/beta-methylene-ATP. Subject to allosteric inhibition by AF-219. Mg(2+) and Ca(2+) slow deactivation of P2RX3. Extracellular ATP-activated non-selective cation channel. Plays particularly important role in sensory neurons where its activation is critical for gustatory, nociceptive responses, visceral reflexes and sensory hypersensitization. This is P2X purinoceptor 3 (P2rx3) from Rattus norvegicus (Rat).